A 184-amino-acid polypeptide reads, in one-letter code: MKNVTDSFVFLGHWPSAGSFGFNTDILATNLINLSVVLGVLIFFGKGVLSDLLDNRKQRILNTIRNSEELRGKAIEQLEKARARLKKVEMDADQFRVNGYSEIEREKMNLINSTYKTLEQFENYKNETIQFEQQKAINQVRQRVFQQALQGALGTLNSCLNNELHLRTINANIGMFGAMNEITD.

A helical membrane pass occupies residues 27–49 (LATNLINLSVVLGVLIFFGKGVL).

The protein belongs to the ATPase B chain family. As to quaternary structure, F-type ATPases have 2 components, F(1) - the catalytic core - and F(0) - the membrane proton channel. F(1) has five subunits: alpha(3), beta(3), gamma(1), delta(1), epsilon(1). F(0) has four main subunits: a(1), b(1), b'(1) and c(10-14). The alpha and beta chains form an alternating ring which encloses part of the gamma chain. F(1) is attached to F(0) by a central stalk formed by the gamma and epsilon chains, while a peripheral stalk is formed by the delta, b and b' chains.

The protein localises to the plastid. The protein resides in the chloroplast thylakoid membrane. Functionally, f(1)F(0) ATP synthase produces ATP from ADP in the presence of a proton or sodium gradient. F-type ATPases consist of two structural domains, F(1) containing the extramembraneous catalytic core and F(0) containing the membrane proton channel, linked together by a central stalk and a peripheral stalk. During catalysis, ATP synthesis in the catalytic domain of F(1) is coupled via a rotary mechanism of the central stalk subunits to proton translocation. Component of the F(0) channel, it forms part of the peripheral stalk, linking F(1) to F(0). The chain is ATP synthase subunit b, chloroplastic from Spinacia oleracea (Spinach).